A 459-amino-acid polypeptide reads, in one-letter code: Bifunctional protein GlmU (459 aa).

The segment at 1–230 is pyrophosphorylase; that stretch reads MSNRFAVILA…FDETLGVNDR (230 aa). Residues 9–12, Lys23, Gln73, and 78–79 contribute to the UDP-N-acetyl-alpha-D-glucosamine site; these read LAAG and GT. Residue Asp103 coordinates Mg(2+). 4 residues coordinate UDP-N-acetyl-alpha-D-glucosamine: Gly140, Glu155, Asn170, and Asn228. Position 228 (Asn228) interacts with Mg(2+). The interval 231–251 is linker; it reads VALSQAEIIMKNRINRKNMVN. An N-acetyltransferase region spans residues 252–459; sequence GVTIIDPSNT…VDQLLNKKKS (208 aa). The UDP-N-acetyl-alpha-D-glucosamine site is built by Arg333 and Lys351. Catalysis depends on His363, which acts as the Proton acceptor. UDP-N-acetyl-alpha-D-glucosamine contacts are provided by Tyr366 and Asn377. Acetyl-CoA contacts are provided by residues 386–387, Ala423, and Arg440; that span reads NY.

This sequence in the N-terminal section; belongs to the N-acetylglucosamine-1-phosphate uridyltransferase family. The protein in the C-terminal section; belongs to the transferase hexapeptide repeat family. In terms of assembly, homotrimer. It depends on Mg(2+) as a cofactor.

It is found in the cytoplasm. The enzyme catalyses alpha-D-glucosamine 1-phosphate + acetyl-CoA = N-acetyl-alpha-D-glucosamine 1-phosphate + CoA + H(+). The catalysed reaction is N-acetyl-alpha-D-glucosamine 1-phosphate + UTP + H(+) = UDP-N-acetyl-alpha-D-glucosamine + diphosphate. The protein operates within nucleotide-sugar biosynthesis; UDP-N-acetyl-alpha-D-glucosamine biosynthesis; N-acetyl-alpha-D-glucosamine 1-phosphate from alpha-D-glucosamine 6-phosphate (route II): step 2/2. It participates in nucleotide-sugar biosynthesis; UDP-N-acetyl-alpha-D-glucosamine biosynthesis; UDP-N-acetyl-alpha-D-glucosamine from N-acetyl-alpha-D-glucosamine 1-phosphate: step 1/1. It functions in the pathway bacterial outer membrane biogenesis; LPS lipid A biosynthesis. Its function is as follows. Catalyzes the last two sequential reactions in the de novo biosynthetic pathway for UDP-N-acetylglucosamine (UDP-GlcNAc). The C-terminal domain catalyzes the transfer of acetyl group from acetyl coenzyme A to glucosamine-1-phosphate (GlcN-1-P) to produce N-acetylglucosamine-1-phosphate (GlcNAc-1-P), which is converted into UDP-GlcNAc by the transfer of uridine 5-monophosphate (from uridine 5-triphosphate), a reaction catalyzed by the N-terminal domain. This chain is Bifunctional protein GlmU, found in Bacillus anthracis (strain A0248).